Reading from the N-terminus, the 285-residue chain is Diphthine methyl ester synthase (285 aa).

Residues Leu-9, Asp-84, Gly-87, 112–113 (SI), Leu-163, Val-221, and His-246 contribute to the S-adenosyl-L-methionine site.

It belongs to the diphthine synthase family.

The protein localises to the cytoplasm. It carries out the reaction 2-[(3S)-amino-3-carboxypropyl]-L-histidyl-[translation elongation factor 2] + 4 S-adenosyl-L-methionine = diphthine methyl ester-[translation elongation factor 2] + 4 S-adenosyl-L-homocysteine + 3 H(+). It functions in the pathway protein modification; peptidyl-diphthamide biosynthesis. Functionally, S-adenosyl-L-methionine-dependent methyltransferase that catalyzes four methylations of the modified target histidine residue in translation elongation factor 2 (EF-2), to form an intermediate called diphthine methyl ester. The four successive methylation reactions represent the second step of diphthamide biosynthesis. This Aspergillus fumigatus (strain ATCC MYA-4609 / CBS 101355 / FGSC A1100 / Af293) (Neosartorya fumigata) protein is Diphthine methyl ester synthase (dph5).